Consider the following 603-residue polypeptide: Deuterosome assembly protein 1 (603 aa).

5 coiled-coil regions span residues 14-59, 85-197, 227-278, 336-399, and 454-480; these read CEAE…NAQT, MTQN…GKKQ, IEKL…ELQS, QDQP…KQLK, and HTSINKLEYENERLRNDLAKLRVNGKS. Serine 546 is subject to Phosphoserine. Residues 557–600 adopt a coiled-coil conformation; that stretch reads AAQHFLLEEEKRAKELEKLLNTHIDELQRHTEFTLNKYSKLKQN.

The protein belongs to the CEP63 family. Interacts with CEP152; the interaction is mutually exclusive with CEP63.

It localises to the cytoplasm. Functionally, key structural component of the deuterosome, a structure that promotes de novo centriole amplification in multiciliated cells. Deuterosome-mediated centriole amplification occurs in terminally differentiated multiciliated cells and can generate more than 100 centrioles. Probably sufficient for the specification and formation of the deuterosome inner core. Interacts with CEP152 and recruits PLK4 to activate centriole biogenesis. The sequence is that of Deuterosome assembly protein 1 from Macaca fascicularis (Crab-eating macaque).